We begin with the raw amino-acid sequence, 619 residues long: 1-deoxy-D-xylulose-5-phosphate synthase (619 aa).

Residues H74 and 115–117 each bind thiamine diphosphate; that span reads GHS. D146 serves as a coordination point for Mg(2+). Residues 147-148, N175, Y285, and E365 each bind thiamine diphosphate; that span reads GA. Residue N175 coordinates Mg(2+).

This sequence belongs to the transketolase family. DXPS subfamily. In terms of assembly, homodimer. The cofactor is Mg(2+). Requires thiamine diphosphate as cofactor.

It catalyses the reaction D-glyceraldehyde 3-phosphate + pyruvate + H(+) = 1-deoxy-D-xylulose 5-phosphate + CO2. The protein operates within metabolic intermediate biosynthesis; 1-deoxy-D-xylulose 5-phosphate biosynthesis; 1-deoxy-D-xylulose 5-phosphate from D-glyceraldehyde 3-phosphate and pyruvate: step 1/1. Its function is as follows. Catalyzes the acyloin condensation reaction between C atoms 2 and 3 of pyruvate and glyceraldehyde 3-phosphate to yield 1-deoxy-D-xylulose-5-phosphate (DXP). This chain is 1-deoxy-D-xylulose-5-phosphate synthase, found in Clostridium perfringens (strain 13 / Type A).